The following is a 525-amino-acid chain: Adenosine deaminase AGSA (525 aa).

Positions 1–25 are cleaved as a signal peptide; the sequence is MSSFSTHNFVAIATFVCWFCCLATA. N-linked (GlcNAc...) asparagine glycosylation is present at asparagine 81. Zn(2+)-binding residues include histidine 117 and histidine 119. A substrate-binding site is contributed by aspartate 120. Asparagine 132 is a glycosylation site (N-linked (GlcNAc...) asparagine). A disulfide bond links cysteine 142 and cysteine 163. N-linked (GlcNAc...) asparagine glycosylation occurs at asparagine 188. Substrate-binding positions include 207-214 and glycine 329; that span reads WVRFNKYF. An N-linked (GlcNAc...) asparagine glycan is attached at asparagine 334. Histidine 361 is a binding site for Zn(2+). The active-site Proton donor is glutamate 364. Histidine 389 serves as the catalytic Proton acceptor. Aspartate 446 contributes to the Zn(2+) binding site. Residue aspartate 447 coordinates substrate.

It belongs to the metallo-dependent hydrolases superfamily. Adenosine and AMP deaminases family. ADGF subfamily. The cofactor is Zn(2+). In terms of tissue distribution, detected in egg cordons and in the developing central nervous system. Not detected in adult central nervous system (at protein level). Atrial gland.

The protein resides in the secreted. The catalysed reaction is adenosine + H2O + H(+) = inosine + NH4(+). Adenosine deaminase that may contribute to the degradation of extracellular adenosine, a signaling molecule that controls a variety of cellular responses. May play a role in the regulation of cell proliferation. The chain is Adenosine deaminase AGSA from Aplysia californica (California sea hare).